A 250-amino-acid chain; its full sequence is tRNA pseudouridine synthase A (250 aa).

The Nucleophile role is filled by aspartate 52. A substrate-binding site is contributed by tyrosine 111.

This sequence belongs to the tRNA pseudouridine synthase TruA family. Homodimer.

The enzyme catalyses uridine(38/39/40) in tRNA = pseudouridine(38/39/40) in tRNA. Its function is as follows. Formation of pseudouridine at positions 38, 39 and 40 in the anticodon stem and loop of transfer RNAs. This Methylobacterium sp. (strain 4-46) protein is tRNA pseudouridine synthase A.